A 267-amino-acid polypeptide reads, in one-letter code: U6 snRNA phosphodiesterase 1 (267 aa).

The interval 1-72 (MNAAPLVGYS…EDDSARHGGR (72 aa)) is disordered. Residue His-122 is the Proton acceptor of the active site. 122 to 124 (HLS) provides a ligand contact to AMP. UMP-binding positions include Gln-166, Tyr-204, and 208 to 212 (SFHVS). Residues Tyr-204 and 206–212 (DPSFHVS) each bind AMP. The active-site Proton donor is the His-210.

The protein belongs to the 2H phosphoesterase superfamily. USB1 family. In terms of assembly, interacts with PLRG1, CDC5L and PRPF19.

It localises to the nucleus. The enzyme catalyses a 3'-end uridylyl-uridine-RNA = a 3'-end 2',3'-cyclophospho-uridine-RNA + uridine. It catalyses the reaction a 3'-end uridylyl-adenosine-RNA = a 3'-end 2',3'-cyclophospho-uridine-RNA + adenosine. In terms of biological role, 3'-5' RNA exonuclease that trims the 3' end of oligo(U) and oligo(A) tracts of the pre-U6 small nuclear RNA (snRNA) molecule, leading to the formation of a mature U6 snRNA 3' end-terminated with a 2',3'-cyclic phosphate. Participates in the U6 snRNA 3' end processing that prevents U6 snRNA degradation. In addition also removes uridines from the 3' end of U6atac snRNA and possibly the vault RNA VTRNA1-1. In Rattus norvegicus (Rat), this protein is U6 snRNA phosphodiesterase 1.